A 76-amino-acid polypeptide reads, in one-letter code: MVGINKPEPFGTGINVPYKLQKVQYFRENFQAFFKFTPKIVLNLVVLVGVVPLTWMFLGQVQQDQKVIVNRKAREQ.

Residues 40 to 60 (IVLNLVVLVGVVPLTWMFLGQ) form a helical membrane-spanning segment.

The protein resides in the membrane. This is an uncharacterized protein from Dictyostelium discoideum (Social amoeba).